We begin with the raw amino-acid sequence, 290 residues long: 33 kDa chaperonin (290 aa).

Disulfide bonds link cysteine 235/cysteine 237 and cysteine 268/cysteine 271.

It belongs to the HSP33 family. In terms of processing, under oxidizing conditions two disulfide bonds are formed involving the reactive cysteines. Under reducing conditions zinc is bound to the reactive cysteines and the protein is inactive.

It localises to the cytoplasm. Redox regulated molecular chaperone. Protects both thermally unfolding and oxidatively damaged proteins from irreversible aggregation. Plays an important role in the bacterial defense system toward oxidative stress. In Streptococcus sanguinis (strain SK36), this protein is 33 kDa chaperonin.